A 349-amino-acid polypeptide reads, in one-letter code: Putative inosamine-phosphate amidinotransferase 2 (349 aa).

Belongs to the amidinotransferase family.

It carries out the reaction 1-amino-1-deoxy-scyllo-inositol 4-phosphate + L-arginine = 1-guanidino-1-deoxy-scyllo-inositol 4-phosphate + L-ornithine. It functions in the pathway antibiotic biosynthesis; streptomycin biosynthesis. Functionally, it is not obvious if strB2 participates in streptomycin biosynthesis as an inosamine-phosphate amidinotransferase. Attempt to measure its activity have failed and the nucleophilic cysteine which is the key residue for amidine transfer is not conserved but replaced by a glycine residue. This chain is Putative inosamine-phosphate amidinotransferase 2 (strB2), found in Streptomyces griseus.